We begin with the raw amino-acid sequence, 610 residues long: uncharacterized protein (610 aa).

Positions 1–28 are enriched in polar residues; that stretch reads MDSPSTSESPLKKNTIQDFGESNMTESP. A disordered region spans residues 1–36; sequence MDSPSTSESPLKKNTIQDFGESNMTESPQSKEEIDE. Residues 41–82 form an RING-type zinc finger; the sequence is CSVCKNEIIDTTSLSDCCHEFCYDCIVGWLTKGSGPFCPMCK. 2 disordered regions span residues 390 to 411 and 431 to 515; these read YRGQPQAPLRLGPNATNPFRPA and TSSA…SADR. A compositionally biased stretch (low complexity) spans 432 to 447; that stretch reads SSAGAGSARSRGSDSV. Acidic residues-rich tracts occupy residues 448 to 470 and 478 to 487; these read VEIDDDDDNDGVDVDDDDREDSD and SEEDSDEEIQ.

This is an uncharacterized protein from Caenorhabditis elegans.